We begin with the raw amino-acid sequence, 195 residues long: MTPILLSAFWTYTLITAMTPGPNNILALSSATSHGFRQSTRVLAGMSLGFLIVMLLCAGISFSLAVIDPAAVHLLSWAGAAYIVWLAWKIATSPTKEDGLQAKPISFWASFALQFVNVKIILYGVTALSTFVLPQTQALSWVVGVSVLLAMIGTFGNVCWALAGHLFQRLFRQYGRQLNIVLALLLVYCAVRIFY.

Over 1–9 (MTPILLSAF) the chain is Periplasmic. A helical membrane pass occupies residues 10-32 (WTYTLITAMTPGPNNILALSSAT). The Cytoplasmic segment spans residues 33–46 (SHGFRQSTRVLAGM). The helical transmembrane segment at 47 to 67 (SLGFLIVMLLCAGISFSLAVI) threads the bilayer. Topologically, residues 68–69 (DP) are periplasmic. Residues 70-90 (AAVHLLSWAGAAYIVWLAWKI) traverse the membrane as a helical segment. The Cytoplasmic portion of the chain corresponds to 91 to 104 (ATSPTKEDGLQAKP). The chain crosses the membrane as a helical span at residues 105 to 125 (ISFWASFALQFVNVKIILYGV). Residues 126-141 (TALSTFVLPQTQALSW) are Periplasmic-facing. Residues 142–162 (VVGVSVLLAMIGTFGNVCWAL) traverse the membrane as a helical segment. The Cytoplasmic segment spans residues 163–176 (AGHLFQRLFRQYGR). A helical membrane pass occupies residues 177 to 194 (QLNIVLALLLVYCAVRIF). Residue tyrosine 195 is a topological domain, periplasmic.

This sequence belongs to the Rht family.

The protein resides in the cell inner membrane. The catalysed reaction is O-acetyl-L-serine(in) = O-acetyl-L-serine(out). The enzyme catalyses L-cysteine(in) = L-cysteine(out). Exporter of O-acetylserine (OAS) and cysteine. The sequence is that of Cysteine/O-acetylserine efflux protein (eamB) from Shigella flexneri serotype 5b (strain 8401).